The sequence spans 252 residues: MLSATQPVSENLPAHGCRHVAIIMDGNGRWAKKQGKIRAFGHKAGAKSVRRAVSFAANNGIDALTLYAFSSENWNRPAQEVSALMELFVWALDSEVKSLHRHNVRLRIIGDISRFNSRLQERIRKSEALTAHNTGLTLNIAANYGGRWDIVQGVRQLAEQVQAGVLRPDQIDEERLGQQICMHELAPVDLVIRTGGEHRISNFLLWQIAYAELYFTDVLWPDFDEQDFEGALHAFANRERRFGGTEPGDDKA.

D25 is an active-site residue. D25 lines the Mg(2+) pocket. Substrate-binding positions include 26 to 29 (GNGR), W30, R38, H42, and 70 to 72 (SSE). The active-site Proton acceptor is N73. The substrate site is built by W74, R76, and R193. Position 198 (H198) interacts with Mg(2+). 199–201 (RIS) is a binding site for substrate. E212 is a Mg(2+) binding site.

It belongs to the UPP synthase family. As to quaternary structure, homodimer. Requires Mg(2+) as cofactor.

It carries out the reaction 8 isopentenyl diphosphate + (2E,6E)-farnesyl diphosphate = di-trans,octa-cis-undecaprenyl diphosphate + 8 diphosphate. Functionally, catalyzes the sequential condensation of isopentenyl diphosphate (IPP) with (2E,6E)-farnesyl diphosphate (E,E-FPP) to yield (2Z,6Z,10Z,14Z,18Z,22Z,26Z,30Z,34E,38E)-undecaprenyl diphosphate (di-trans,octa-cis-UPP). UPP is the precursor of glycosyl carrier lipid in the biosynthesis of bacterial cell wall polysaccharide components such as peptidoglycan and lipopolysaccharide. The protein is Ditrans,polycis-undecaprenyl-diphosphate synthase ((2E,6E)-farnesyl-diphosphate specific) of Salmonella paratyphi A (strain ATCC 9150 / SARB42).